The chain runs to 209 residues: dTTP/UTP pyrophosphatase (209 aa).

The active-site Proton acceptor is D79.

The protein belongs to the Maf family. YhdE subfamily. It depends on a divalent metal cation as a cofactor.

It is found in the cytoplasm. The catalysed reaction is dTTP + H2O = dTMP + diphosphate + H(+). The enzyme catalyses UTP + H2O = UMP + diphosphate + H(+). Functionally, nucleoside triphosphate pyrophosphatase that hydrolyzes dTTP and UTP. May have a dual role in cell division arrest and in preventing the incorporation of modified nucleotides into cellular nucleic acids. This chain is dTTP/UTP pyrophosphatase, found in Chelativorans sp. (strain BNC1).